A 159-amino-acid chain; its full sequence is Neuroglobin (159 aa).

Positions 3-151 (KLSSKDKELI…VVASMSRGWA (149 aa)) constitute a Globin domain. Residues His-66 and His-98 each coordinate heme b.

This sequence belongs to the globin family. In terms of assembly, monomer. Homodimers and homotetramers. Mainly monomeric but also detected as part of homodimers and homotetramers.

It localises to the cytoplasm. The protein resides in the cytosol. The protein localises to the mitochondrion matrix. The enzyme catalyses Fe(III)-heme b-[protein] + nitric oxide + H2O = Fe(II)-heme b-[protein] + nitrite + 2 H(+). Its function is as follows. Monomeric globin with a bis-histidyl six-coordinate heme-iron atom through which it can bind dioxygen, carbon monoxide and nitric oxide. Could help transport oxygen and increase its availability to the metabolically active neuronal tissues, though its low quantity in tissues as well as its high affinity for dioxygen, which may limit its oxygen-releasing ability, argue against it. The ferrous/deoxygenated form exhibits a nitrite reductase activity and it could produce nitric oxide which in turn inhibits cellular respiration in response to hypoxia. In its ferrous/deoxygenated state, it may also exhibit GDI (Guanine nucleotide Dissociation Inhibitor) activity toward heterotrimeric G-alpha proteins, thereby regulating signal transduction to facilitate neuroprotective responses in the wake of hypoxia and associated oxidative stress. The chain is Neuroglobin (ngb) from Tetraodon nigroviridis (Spotted green pufferfish).